The following is an 89-amino-acid chain: Phosphocarrier protein HPr (89 aa).

Residues 1 to 89 enclose the HPr domain; sequence MERTVTVVPE…DILSTPEAKQ (89 aa). Catalysis depends on His-14, which acts as the Pros-phosphohistidine intermediate. The residue at position 47 (Ser-47) is a Phosphoserine; by HPrK/P.

The protein belongs to the HPr family.

The protein localises to the cytoplasm. Phosphorylation on Ser-47 inhibits the phosphoryl transfer from enzyme I to HPr. General (non sugar-specific) component of the phosphoenolpyruvate-dependent sugar phosphotransferase system (sugar PTS). This major carbohydrate active-transport system catalyzes the phosphorylation of incoming sugar substrates concomitantly with their translocation across the cell membrane. The phosphoryl group from phosphoenolpyruvate (PEP) is transferred to the phosphoryl carrier protein HPr by enzyme I. Phospho-HPr then transfers it to the PTS EIIA domain. Is involved in fructose transport. This chain is Phosphocarrier protein HPr (ptsH1), found in Haloferax volcanii (strain ATCC 29605 / DSM 3757 / JCM 8879 / NBRC 14742 / NCIMB 2012 / VKM B-1768 / DS2) (Halobacterium volcanii).